We begin with the raw amino-acid sequence, 379 residues long: Cytochrome b (379 aa).

4 helical membrane passes run 34-54, 78-100, 113-133, and 179-199; these read YGSLLGITLVFQIMTGIMLAM, WMIRFFHGNGASFFFICLYVHIG, TWNIGIIILLLTMATAFLGYV, and FFSLHFLLPFIISAMVMIHLL. His84 and His98 together coordinate heme b. Residues His183 and His197 each coordinate heme b. His202 contributes to the a ubiquinone binding site. Helical transmembrane passes span 225-245, 289-309, 320-340, and 345-365; these read FSIKDLITMMLFIMILSFLVL, LGGVIALLMSIMILFFLPIFS, WSGMIFWSFINIIILLTWIGA, and APYIIFGQILSVLYFLTFFWM.

This sequence belongs to the cytochrome b family. The main subunits of complex b-c1 are: cytochrome b, cytochrome c1 and the Rieske protein. Heme b is required as a cofactor.

The protein resides in the mitochondrion inner membrane. Functionally, component of the ubiquinol-cytochrome c reductase complex (complex III or cytochrome b-c1 complex) that is part of the mitochondrial respiratory chain. The b-c1 complex mediates electron transfer from ubiquinol to cytochrome c. Contributes to the generation of a proton gradient across the mitochondrial membrane that is then used for ATP synthesis. The protein is Cytochrome b (mt:Cyt-b) of Epiperipatus biolleyi (Velvet worm).